Consider the following 505-residue polypeptide: Glycerol kinase 2 (505 aa).

Thr17 provides a ligand contact to ADP. ATP contacts are provided by Thr17, Thr18, and Ser19. Residue Thr17 coordinates sn-glycerol 3-phosphate. Arg21 is an ADP binding site. Arg87, Glu88, Tyr139, and Asp249 together coordinate sn-glycerol 3-phosphate. Glycerol-binding residues include Arg87, Glu88, Tyr139, Asp249, and Gln250. ADP-binding residues include Thr271 and Gly314. Positions 271, 314, 318, and 415 each coordinate ATP. Gly415 and Asn419 together coordinate ADP.

It belongs to the FGGY kinase family.

The enzyme catalyses glycerol + ATP = sn-glycerol 3-phosphate + ADP + H(+). It functions in the pathway polyol metabolism; glycerol degradation via glycerol kinase pathway; sn-glycerol 3-phosphate from glycerol: step 1/1. With respect to regulation, inhibited by fructose 1,6-bisphosphate (FBP). In terms of biological role, key enzyme in the regulation of glycerol uptake and metabolism. Catalyzes the phosphorylation of glycerol to yield sn-glycerol 3-phosphate. The protein is Glycerol kinase 2 of Pseudomonas aeruginosa (strain ATCC 15692 / DSM 22644 / CIP 104116 / JCM 14847 / LMG 12228 / 1C / PRS 101 / PAO1).